The primary structure comprises 77 residues: Protein IDA (77 aa).

Residues 1-26 form the signal peptide; sequence MAPCRTMMVLLCFVLFLAASSSCVAA. Positions 56–69 are RLK5-binding; the sequence is GVPIPPSAPSKRHN.

Interaction with RLK5. In terms of tissue distribution, expressed specifically in the floral abscission zone.

The protein resides in the secreted. It is found in the extracellular space. Its function is as follows. Involved in an ethylene-independent separation step of floral abscission. Promotes abscission zone (AZ) cells rounding. May act with RLK5 and HSL2 as ligand-receptor pairs. In Arabidopsis thaliana (Mouse-ear cress), this protein is Protein IDA.